Consider the following 277-residue polypeptide: 4-hydroxy-3-methylbut-2-enyl diphosphate reductase (277 aa).

Cys-12 is a binding site for [4Fe-4S] cluster. Positions 36 and 70 each coordinate (2E)-4-hydroxy-3-methylbut-2-enyl diphosphate. Positions 36 and 70 each coordinate dimethylallyl diphosphate. Residues His-36 and His-70 each contribute to the isopentenyl diphosphate site. Cys-92 is a binding site for [4Fe-4S] cluster. His-120 lines the (2E)-4-hydroxy-3-methylbut-2-enyl diphosphate pocket. Position 120 (His-120) interacts with dimethylallyl diphosphate. His-120 is a binding site for isopentenyl diphosphate. Glu-122 (proton donor) is an active-site residue. Thr-158 serves as a coordination point for (2E)-4-hydroxy-3-methylbut-2-enyl diphosphate. Cys-186 lines the [4Fe-4S] cluster pocket. Ser-214, Asn-216, and Ser-258 together coordinate (2E)-4-hydroxy-3-methylbut-2-enyl diphosphate. The dimethylallyl diphosphate site is built by Ser-214, Asn-216, and Ser-258. Residues Ser-214, Asn-216, and Ser-258 each coordinate isopentenyl diphosphate.

Belongs to the IspH family. [4Fe-4S] cluster is required as a cofactor.

It carries out the reaction isopentenyl diphosphate + 2 oxidized [2Fe-2S]-[ferredoxin] + H2O = (2E)-4-hydroxy-3-methylbut-2-enyl diphosphate + 2 reduced [2Fe-2S]-[ferredoxin] + 2 H(+). It catalyses the reaction dimethylallyl diphosphate + 2 oxidized [2Fe-2S]-[ferredoxin] + H2O = (2E)-4-hydroxy-3-methylbut-2-enyl diphosphate + 2 reduced [2Fe-2S]-[ferredoxin] + 2 H(+). The protein operates within isoprenoid biosynthesis; dimethylallyl diphosphate biosynthesis; dimethylallyl diphosphate from (2E)-4-hydroxy-3-methylbutenyl diphosphate: step 1/1. It participates in isoprenoid biosynthesis; isopentenyl diphosphate biosynthesis via DXP pathway; isopentenyl diphosphate from 1-deoxy-D-xylulose 5-phosphate: step 6/6. Catalyzes the conversion of 1-hydroxy-2-methyl-2-(E)-butenyl 4-diphosphate (HMBPP) into a mixture of isopentenyl diphosphate (IPP) and dimethylallyl diphosphate (DMAPP). Acts in the terminal step of the DOXP/MEP pathway for isoprenoid precursor biosynthesis. The chain is 4-hydroxy-3-methylbut-2-enyl diphosphate reductase from Campylobacter jejuni subsp. jejuni serotype O:23/36 (strain 81-176).